The primary structure comprises 479 residues: Anaerobic nitric oxide reductase flavorubredoxin (479 aa).

The tract at residues leucine 30–isoleucine 210 is zinc metallo-hydrolase. Histidine 79, glutamate 81, aspartate 83, histidine 147, aspartate 166, and histidine 227 together coordinate Fe cation. The Flavodoxin-like domain occupies isoleucine 254 to alanine 393. FMN is bound by residues threonine 260 to asparagine 264 and alanine 342 to leucine 369. The Rubredoxin-like domain maps to glycine 423–leucine 474. Residues cysteine 428, cysteine 431, cysteine 461, and cysteine 464 each contribute to the Fe cation site.

In the N-terminal section; belongs to the zinc metallo-hydrolase group 3 family. As to quaternary structure, homotetramer. The cofactor is Fe cation. Requires FMN as cofactor.

The protein resides in the cytoplasm. It functions in the pathway nitrogen metabolism; nitric oxide reduction. In terms of biological role, anaerobic nitric oxide reductase; uses NADH to detoxify nitric oxide (NO), protecting several 4Fe-4S NO-sensitive enzymes. Has at least 2 reductase partners, only one of which (NorW, flavorubredoxin reductase) has been identified. NO probably binds to the di-iron center; electrons enter from the NorW at rubredoxin and are transferred sequentially to the FMN center and the di-iron center. Also able to function as an aerobic oxygen reductase. In Salmonella typhi, this protein is Anaerobic nitric oxide reductase flavorubredoxin.